The primary structure comprises 632 residues: Gamma-aminobutyric acid receptor subunit theta (632 aa).

Residues 1 to 21 (MGIRGMLRAAVILLLIRTWLA) form the signal peptide. Over 22 to 268 (EGNYPSPIPK…FQVQREVNSY (247 aa)) the chain is Extracellular. A glycan (N-linked (GlcNAc...) asparagine) is linked at Asn127. Cys183 and Cys197 are joined by a disulfide. A helical membrane pass occupies residues 269–289 (LVQVYWPTVLTTITSWISFWM). Residues 290 to 297 (NYDSSAAR) are Cytoplasmic-facing. Residues 298–315 (VTIGLTSMLILTTIDSHL) form a helical membrane-spanning segment. Over 316 to 326 (RDKLPNISCIK) the chain is Extracellular. A helical membrane pass occupies residues 327-347 (AIDIYILVCLFFVFLSLLEYV). The Cytoplasmic segment spans residues 348–611 (YINYLFYSRG…DYVPKVDKWS (264 aa)). Disordered stretches follow at residues 410–458 (SPES…STSE) and 491–523 (HGVT…LHHG). Polar residues predominate over residues 413-425 (SLGSLTSTSEQAQ). The segment covering 426–439 (LATSESLSPLTSLS) has biased composition (low complexity). The segment covering 448 to 458 (ESLSDLPSTSE) has biased composition (polar residues). The span at 491 to 511 (HGVTHDHEDSNESLSSDERHG) shows a compositional bias: basic and acidic residues. A helical transmembrane segment spans residues 612 to 632 (RFLFPLAFGLFNIVYWVYHMY).

It belongs to the ligand-gated ion channel (TC 1.A.9) family. Gamma-aminobutyric acid receptor (TC 1.A.9.5) subfamily. GABRQ sub-subfamily. Heteropentamer, formed by a combination of alpha (GABRA1-6), beta (GABRB1-3), gamma (GABRG1-3), delta (GABRD), epsilon (GABRE), rho (GABRR1-3), pi (GABRP) and theta (GABRQ) chains, each subunit exhibiting distinct physiological and pharmacological properties. In terms of tissue distribution, expressed in brain.

Its subcellular location is the postsynaptic cell membrane. It localises to the cell membrane. It carries out the reaction chloride(in) = chloride(out). Its activity is regulated as follows. Potentiated by etomidate, propofol, pregnanolone and pentobarbital. Functionally, theta subunit of the heteropentameric ligand-gated chloride channel gated by gamma-aminobutyric acid (GABA), a major inhibitory neurotransmitter in the brain. GABA-gated chloride channels, also named GABA(A) receptors (GABAAR), consist of five subunits arranged around a central pore and contain GABA active binding site(s) located at the alpha and beta subunit interfaces. When activated by GABA, GABAARs selectively allow the flow of chloride anions across the cell membrane down their electrochemical gradient. The polypeptide is Gamma-aminobutyric acid receptor subunit theta (Homo sapiens (Human)).